Consider the following 1648-residue polypeptide: Putative 1-phosphatidylinositol-3-phosphate 5-kinase FAB1C (1648 aa).

Residues 97 to 106 (YDKVHPRDSP) are compositionally biased toward basic and acidic residues. Disordered stretches follow at residues 97–116 (YDKVHPRDSPDPPSSLATES), 241–276 (QEDHEEEEDKLQQPLDFENNGRIWYPPPPEDENDDA), 721–746 (SEIPETPTQQPSGEEDNGRGEEENQL), and 1083–1139 (KTGD…GTSL). Basic and acidic residues predominate over residues 1084–1130 (TGDDNAPRNPEMHDPPKIDRRMQEGSDERDEQSHTDSEANGDNKDPE). Residues 1316–1639 (NLNNRESEPS…RFRKAMTTYF (324 aa)) form the PIPK domain.

As to quaternary structure, component of the PI(3,5)P2 regulatory complex at least composed of ATG18, SAC/FIG4, FAB1 and VAC14. Mg(2+) serves as cofactor. Requires Mn(2+) as cofactor.

It catalyses the reaction a 1,2-diacyl-sn-glycero-3-phospho-(1D-myo-inositol-3-phosphate) + ATP = a 1,2-diacyl-sn-glycero-3-phospho-(1D-myo-inositol-3,5-bisphosphate) + ADP + H(+). Its function is as follows. The PI(3,5)P2 regulatory complex regulates both the synthesis and turnover of phosphatidylinositol 3,5-bisphosphate (PtdIns(3,5)P2). Catalyzes the phosphorylation of phosphatidylinositol 3-phosphate on the fifth hydroxyl of the myo-inositol ring, to form phosphatidylinositol 3,5-bisphosphate. The sequence is that of Putative 1-phosphatidylinositol-3-phosphate 5-kinase FAB1C (FAB1C) from Arabidopsis thaliana (Mouse-ear cress).